The following is a 318-amino-acid chain: 4-hydroxy-3-methylbut-2-enyl diphosphate reductase (318 aa).

[4Fe-4S] cluster is bound at residue C12. (2E)-4-hydroxy-3-methylbut-2-enyl diphosphate-binding residues include H41 and H74. Residues H41 and H74 each contribute to the dimethylallyl diphosphate site. The isopentenyl diphosphate site is built by H41 and H74. C96 is a binding site for [4Fe-4S] cluster. H124 serves as a coordination point for (2E)-4-hydroxy-3-methylbut-2-enyl diphosphate. H124 provides a ligand contact to dimethylallyl diphosphate. Position 124 (H124) interacts with isopentenyl diphosphate. E126 functions as the Proton donor in the catalytic mechanism. T167 contributes to the (2E)-4-hydroxy-3-methylbut-2-enyl diphosphate binding site. C197 contributes to the [4Fe-4S] cluster binding site. S225, S226, N227, and S269 together coordinate (2E)-4-hydroxy-3-methylbut-2-enyl diphosphate. Residues S225, S226, N227, and S269 each coordinate dimethylallyl diphosphate. Isopentenyl diphosphate contacts are provided by S225, S226, N227, and S269.

Belongs to the IspH family. Requires [4Fe-4S] cluster as cofactor.

It carries out the reaction isopentenyl diphosphate + 2 oxidized [2Fe-2S]-[ferredoxin] + H2O = (2E)-4-hydroxy-3-methylbut-2-enyl diphosphate + 2 reduced [2Fe-2S]-[ferredoxin] + 2 H(+). The enzyme catalyses dimethylallyl diphosphate + 2 oxidized [2Fe-2S]-[ferredoxin] + H2O = (2E)-4-hydroxy-3-methylbut-2-enyl diphosphate + 2 reduced [2Fe-2S]-[ferredoxin] + 2 H(+). Its pathway is isoprenoid biosynthesis; dimethylallyl diphosphate biosynthesis; dimethylallyl diphosphate from (2E)-4-hydroxy-3-methylbutenyl diphosphate: step 1/1. It functions in the pathway isoprenoid biosynthesis; isopentenyl diphosphate biosynthesis via DXP pathway; isopentenyl diphosphate from 1-deoxy-D-xylulose 5-phosphate: step 6/6. Catalyzes the conversion of 1-hydroxy-2-methyl-2-(E)-butenyl 4-diphosphate (HMBPP) into a mixture of isopentenyl diphosphate (IPP) and dimethylallyl diphosphate (DMAPP). Acts in the terminal step of the DOXP/MEP pathway for isoprenoid precursor biosynthesis. The protein is 4-hydroxy-3-methylbut-2-enyl diphosphate reductase of Francisella philomiragia subsp. philomiragia (strain ATCC 25017 / CCUG 19701 / FSC 153 / O#319-036).